A 411-amino-acid chain; its full sequence is Eukaryotic initiation factor 4A-III (411 aa).

An N-acetylmethionine modification is found at Met-1. Residue Ala-2 is modified to N-acetylalanine; in Eukaryotic initiation factor 4A-III, N-terminally processed. A phosphoserine mark is found at Ser-10 and Ser-12. Lys-19 participates in a covalent cross-link: Glycyl lysine isopeptide (Lys-Gly) (interchain with G-Cter in SUMO2). The Q motif motif lies at 38 to 66 (PTFDTMGLREDLLRGIYAYGFEKPSAIQQ). Residues Lys-60, Gln-65, and 85-90 (GTGKTA) each bind ATP. Residues 69 to 239 (IKQIIKGRDV…NKFMTDPIRI (171 aa)) form the Helicase ATP-binding domain. Position 124 is an N6-acetyllysine (Lys-124). Residue Lys-152 forms a Glycyl lysine isopeptide (Lys-Gly) (interchain with G-Cter in SUMO2) linkage. Thr-163 bears the Phosphothreonine mark. Residues 187–190 (DEAD) carry the DEAD box motif. 2 positions are modified to N6-acetyllysine: Lys-198 and Lys-296. The 162-residue stretch at 250–411 (GIKQFFVAVE…EMPMNVADLI (162 aa)) folds into the Helicase C-terminal domain. Lys-314 participates in a covalent cross-link: Glycyl lysine isopeptide (Lys-Gly) (interchain with G-Cter in SUMO2). Lys-321 is modified (N6-acetyllysine). ATP is bound by residues Asp-342 and 367 to 371 (RSGRY). Residues Lys-374 and Lys-382 each participate in a glycyl lysine isopeptide (Lys-Gly) (interchain with G-Cter in SUMO2) cross-link.

This sequence belongs to the DEAD box helicase family. eIF4A subfamily. In terms of assembly, identified in the spliceosome C complex. Core component of the mRNA splicing-dependent exon junction complex (EJC); the core complex contains CASC3, EIF4A3, MAGOH or MAGOHB, and RBM8A. Interacts with CASC3, MAGOH, NXF1, RBM8A and ALYREF/THOC4. Component of the ALYREF/THOC4-EJC-RNA complex; in the complex interacts with MAGOH, RBM8A and THOC4 (via the WXHD motif); these interactions are likely specific to RNA-bound EJC. May interact with NOM1. Interacts with POLDIP3. Interacts with CWC22 and PRPF19 in an RNA-independent manner. Direct interaction with CWC22 is mediated by the helicase C-terminal domain. Full interaction with CWC22 occurs only when EIF4A3 is not part of the EJC and prevents EIF4A3 binding to RNA. Identified in a complex composed of the EJC core, UPF3B and UPF2. The EJC core can also interact with UPF3A (in vitro). Interacts with NCBP3. Interacts with NRDE2. Interacts with DHX34; the interaction is RNA-independent.

The protein localises to the nucleus. It localises to the nucleus speckle. It is found in the cytoplasm. It catalyses the reaction ATP + H2O = ADP + phosphate + H(+). Its activity is regulated as follows. The ATPase activity is increased some 4-fold in the presence of RNA. ATP-dependent RNA helicase. Involved in pre-mRNA splicing as component of the spliceosome. Core component of the splicing-dependent multiprotein exon junction complex (EJC) deposited at splice junctions on mRNAs. The EJC is a dynamic structure consisting of core proteins and several peripheral nuclear and cytoplasmic associated factors that join the complex only transiently either during EJC assembly or during subsequent mRNA metabolism. The EJC marks the position of the exon-exon junction in the mature mRNA for the gene expression machinery and the core components remain bound to spliced mRNAs throughout all stages of mRNA metabolism thereby influencing downstream processes including nuclear mRNA export, subcellular mRNA localization, translation efficiency and nonsense-mediated mRNA decay (NMD). Its RNA-dependent ATPase and RNA-helicase activities are induced by CASC3, but abolished in presence of the MAGOH-RBM8A heterodimer, thereby trapping the ATP-bound EJC core onto spliced mRNA in a stable conformation. The inhibition of ATPase activity by the MAGOH-RBM8A heterodimer increases the RNA-binding affinity of the EJC. Involved in translational enhancement of spliced mRNAs after formation of the 80S ribosome complex. Binds spliced mRNA in sequence-independent manner, 20-24 nucleotides upstream of mRNA exon-exon junctions. Shows higher affinity for single-stranded RNA in an ATP-bound core EJC complex than after the ATP is hydrolyzed. Involved in the splicing modulation of BCL2L1/Bcl-X (and probably other apoptotic genes); specifically inhibits formation of proapoptotic isoforms; the function is different from the established EJC assembly. Involved in craniofacial development. This is Eukaryotic initiation factor 4A-III (Eif4a3) from Mus musculus (Mouse).